The chain runs to 194 residues: CASP-like protein 4C1 (194 aa).

Residues 1 to 35 (MRSPHAFRNGESPTLRDHTHFHSTVTAQKLRRFNS) lie on the Cytoplasmic side of the membrane. Residues 36–56 (LILLLRLASFSFSLASAVFML) traverse the membrane as a helical segment. Residues 57-74 (TNSRGSASPHWYDFDAFR) lie on the Extracellular side of the membrane. A helical transmembrane segment spans residues 75–95 (FVFVANAIVALYSVFEMGTCV). Over 96-114 (WEFSRETTLWPEAFQVWFD) the chain is Cytoplasmic. A helical transmembrane segment spans residues 115–135 (FGHDQVFSYLLLSAGSAAAAL). Residues 136–157 (ARTMRGGDTCTANKAFCLQSDV) lie on the Extracellular side of the membrane. The helical transmembrane segment at 158 to 178 (AIGLGFAAFLFLAFSSCFSGF) threads the bilayer. Residues 179–194 (RVACFLITGSRFHLYS) lie on the Cytoplasmic side of the membrane.

Belongs to the Casparian strip membrane proteins (CASP) family. Homodimer and heterodimers.

It localises to the cell membrane. The chain is CASP-like protein 4C1 from Arabidopsis thaliana (Mouse-ear cress).